Here is a 282-residue protein sequence, read N- to C-terminus: Probable endonuclease 4 (282 aa).

Positions 69, 109, 145, 179, 182, 216, 229, 231, and 261 each coordinate Zn(2+).

Belongs to the AP endonuclease 2 family. It depends on Zn(2+) as a cofactor.

It catalyses the reaction Endonucleolytic cleavage to 5'-phosphooligonucleotide end-products.. In terms of biological role, endonuclease IV plays a role in DNA repair. It cleaves phosphodiester bonds at apurinic or apyrimidinic (AP) sites, generating a 3'-hydroxyl group and a 5'-terminal sugar phosphate. The chain is Probable endonuclease 4 from Campylobacter fetus subsp. fetus (strain 82-40).